The following is an 89-amino-acid chain: MKVIPLGERLLIKPIKEEKRTEGGIVLPDTAKEKPMKAEVIEIGKDVEDIDIKVGDKVIFSKYAGTEIKIDDEDYILIDQDDILAKVEE.

Belongs to the GroES chaperonin family. Heptamer of 7 subunits arranged in a ring. Interacts with the chaperonin GroEL.

It localises to the cytoplasm. Functionally, together with the chaperonin GroEL, plays an essential role in assisting protein folding. The GroEL-GroES system forms a nano-cage that allows encapsulation of the non-native substrate proteins and provides a physical environment optimized to promote and accelerate protein folding. GroES binds to the apical surface of the GroEL ring, thereby capping the opening of the GroEL channel. This is Co-chaperonin GroES from Kosmotoga olearia (strain ATCC BAA-1733 / DSM 21960 / TBF 19.5.1).